Here is a 585-residue protein sequence, read N- to C-terminus: Protein NRT1/ PTR FAMILY 8.3 (585 aa).

N-acetylglycine is present on Gly2. The helical transmembrane segment at 91 to 111 (WQGTCYLTPLIGAVLADAYWG) threads the bilayer. Thr115 is modified (phosphothreonine). Helical transmembrane passes span 116-136 (IACF…SASV), 154-174 (PAQY…TGGI), 200-220 (FFNW…SLLV), 228-248 (WGLG…SFFF), 351-371 (FPIW…STMF), 387-407 (LPPA…VPLY), 431-451 (MGIG…VEII), 472-492 (VLWQ…YFIG), 511-531 (ALAL…LTLV), and 556-576 (FFWL…FSAA).

It belongs to the major facilitator superfamily. Proton-dependent oligopeptide transporter (POT/PTR) (TC 2.A.17) family. Highly expressed in young leaves, roots and germinating seeds, intermediately in stems, flowers and mature leaves and at low level in siliques.

The protein resides in the vacuole membrane. Inhibited by leucyl-ethionine. Functionally, peptide transporter. Mediates the transport of di- and tripeptides. High affinity, low capacity transporter. Can also transport histidine. The sequence is that of Protein NRT1/ PTR FAMILY 8.3 (NPF8.3) from Arabidopsis thaliana (Mouse-ear cress).